The following is a 451-amino-acid chain: MHYQLRRRGTKMTELRGRLRAAGDRLRALPTHPGVGEARGFGEYLIQRIQQDQCAKSAGMLAYVTLLAIVPLMTIGFSVLAAFPVFEGVTDRLREAMVDYLVPAASDAIDEHLENFMGRAAELTAVGIAGLTVTALLLLNTIERVLNEIWRVERPRPTLQRFMVYWTVLTMGPLLLGVSVASTSYMGTVNLGPLEPPSDLIAQLLNLAPFVVQAIVFSLIYSLVPHRSVPVLHAVIGGVVASGLFELAKGGFAAFIARAPTYEVVYGALAALPIFLVWLYISWLVILIGAEVTQALRGYRWRTGGDLARNRWALVLAVHILGHLYQAQRRGAGVTFAELLEQEPDAGEPALAEALETLRRHHVIERSADGAWLLARDTSTFTLAELHRMLAYPLPPAAGLETGAPWDRRLAERLRRVEERWEQSFDLSLSDLLEPTAEEAGAGRSARAEVA.

The next 6 membrane-spanning stretches (helical) occupy residues 66 to 86, 122 to 142, 162 to 182, 204 to 224, 228 to 248, and 268 to 288; these read LLAIVPLMTIGFSVLAAFPVF, ELTAVGIAGLTVTALLLLNTI, FMVYWTVLTMGPLLLGVSVAS, LLNLAPFVVQAIVFSLIYSLV, SVPVLHAVIGGVVASGLFELA, and ALAALPIFLVWLYISWLVILI.

The protein belongs to the UPF0761 family.

Its subcellular location is the cell inner membrane. The polypeptide is UPF0761 membrane protein Hhal_0704 (Halorhodospira halophila (strain DSM 244 / SL1) (Ectothiorhodospira halophila (strain DSM 244 / SL1))).